The primary structure comprises 101 residues: Urease subunit beta (101 aa).

The protein belongs to the urease beta subunit family. As to quaternary structure, heterotrimer of UreA (gamma), UreB (beta) and UreC (alpha) subunits. Three heterotrimers associate to form the active enzyme.

The protein localises to the cytoplasm. The catalysed reaction is urea + 2 H2O + H(+) = hydrogencarbonate + 2 NH4(+). It functions in the pathway nitrogen metabolism; urea degradation; CO(2) and NH(3) from urea (urease route): step 1/1. The chain is Urease subunit beta from Burkholderia cenocepacia (strain ATCC BAA-245 / DSM 16553 / LMG 16656 / NCTC 13227 / J2315 / CF5610) (Burkholderia cepacia (strain J2315)).